A 459-amino-acid polypeptide reads, in one-letter code: UDP-N-acetylmuramoylalanine--D-glutamate ligase (459 aa).

Position 120-126 (120-126 (GSNGKTT)) interacts with ATP.

This sequence belongs to the MurCDEF family.

It localises to the cytoplasm. The catalysed reaction is UDP-N-acetyl-alpha-D-muramoyl-L-alanine + D-glutamate + ATP = UDP-N-acetyl-alpha-D-muramoyl-L-alanyl-D-glutamate + ADP + phosphate + H(+). Its pathway is cell wall biogenesis; peptidoglycan biosynthesis. Cell wall formation. Catalyzes the addition of glutamate to the nucleotide precursor UDP-N-acetylmuramoyl-L-alanine (UMA). The sequence is that of UDP-N-acetylmuramoylalanine--D-glutamate ligase from Lactobacillus acidophilus (strain ATCC 700396 / NCK56 / N2 / NCFM).